We begin with the raw amino-acid sequence, 329 residues long: MNMESVLHNFATVLIYVEFIFGNLSNGFIVLSNFLDWVIKQKLSLIDKILLTLAISRITLIWEIYAWFKSLYDPSSFLIGIEFQIIYFSWVLSSHFSLWLATTLSVFYLLRIANCSWQIFLYLKWRLKQLIVGMLLGSLVFLLGNLMQSMLEERFYQYGRNTSVNTMSNDLAMWTELIFFNMAMFSVIPFTLALISFLLLIFSLWKHLQKMQLISRRHRDPSTKAHMNALRIMVSFLLLYTMHFLSLLISWIAQKHQSELADIIGMITELMYPSVHSCILILGNSKLKQTSLCMLRHLRCRLKGENITIAYSNQITSFCVFCVANKSMR.

Topologically, residues 1 to 9 (MNMESVLHN) are extracellular. The helical transmembrane segment at 10 to 30 (FATVLIYVEFIFGNLSNGFIV) threads the bilayer. Over 31–47 (LSNFLDWVIKQKLSLID) the chain is Cytoplasmic. A helical transmembrane segment spans residues 48-68 (KILLTLAISRITLIWEIYAWF). The Extracellular segment spans residues 69-85 (KSLYDPSSFLIGIEFQI). Residues 86–108 (IYFSWVLSSHFSLWLATTLSVFY) traverse the membrane as a helical segment. Over 109–129 (LLRIANCSWQIFLYLKWRLKQ) the chain is Cytoplasmic. The chain crosses the membrane as a helical span at residues 130-150 (LIVGMLLGSLVFLLGNLMQSM). Topologically, residues 151-181 (LEERFYQYGRNTSVNTMSNDLAMWTELIFFN) are extracellular. An N-linked (GlcNAc...) asparagine glycan is attached at asparagine 161. Residues 182 to 202 (MAMFSVIPFTLALISFLLLIF) traverse the membrane as a helical segment. The Cytoplasmic segment spans residues 203–231 (SLWKHLQKMQLISRRHRDPSTKAHMNALR). A helical transmembrane segment spans residues 232–252 (IMVSFLLLYTMHFLSLLISWI). Over 253–262 (AQKHQSELAD) the chain is Extracellular. The chain crosses the membrane as a helical span at residues 263-283 (IIGMITELMYPSVHSCILILG). Over 284-329 (NSKLKQTSLCMLRHLRCRLKGENITIAYSNQITSFCVFCVANKSMR) the chain is Cytoplasmic.

It belongs to the G-protein coupled receptor T2R family.

It localises to the membrane. Its function is as follows. Putative taste receptor which may play a role in the perception of bitterness. The sequence is that of Taste receptor type 2 member 102 from Mus musculus (Mouse).